The primary structure comprises 365 residues: Serine protease 40 (365 aa).

Residues 1 to 34 form the signal peptide; that stretch reads MCGIRAKKSGLGGYGAGLLAALLGVSFLSQHAQT. N-linked (GlcNAc...) asparagine glycosylation is present at Asn-44. Residues 69–313 form the Peptidase S1 domain; sequence IYGGQIAGAE…FDKWIKDNKK (245 aa). Cys-94 and Cys-110 are joined by a disulfide. Active-site charge relay system residues include His-109 and Asp-159. Intrachain disulfides connect Cys-193–Cys-270, Cys-226–Cys-249, and Cys-260–Cys-288. Ser-264 (charge relay system) is an active-site residue. The interval 312–343 is disordered; sequence KKSSSNSKPGESPHHPGSPENENPEGDNKNQG.

It belongs to the peptidase S1 family. In terms of tissue distribution, expressed in testis. More specifically, abundantly expressed in the haploid round spermatid.

The protein resides in the cytoplasmic vesicle. It is found in the secretory vesicle. Its subcellular location is the acrosome. It localises to the secreted. May play an important role in the sperm/egg interaction; released during the acrosome reaction. This chain is Serine protease 40 (Prss40), found in Mus musculus (Mouse).